Consider the following 215-residue polypeptide: UPF0323 lipoprotein jhp_0217 (215 aa).

An N-terminal signal peptide occupies residues 1–27 (MKKPYRKISDYAIVGGLSALVMVSIVG). A lipid anchor (N-palmitoyl cysteine) is attached at cysteine 28. Cysteine 28 carries S-diacylglycerol cysteine lipidation. Polar residues predominate over residues 158-169 (QRTYKSPQAYQR). The interval 158-215 (QRTYKSPQAYQRSQNSFSKSAPSASSMGTASKGQSGFFGSSRPTSSPAISSGTRGFNA) is disordered. Positions 170-183 (SQNSFSKSAPSASS) are enriched in low complexity. The span at 184–195 (MGTASKGQSGFF) shows a compositional bias: polar residues. A compositionally biased stretch (low complexity) spans 197–208 (SSRPTSSPAISS).

This sequence belongs to the UPF0323 family.

It is found in the cell membrane. The protein is UPF0323 lipoprotein jhp_0217 of Helicobacter pylori (strain J99 / ATCC 700824) (Campylobacter pylori J99).